Here is a 354-residue protein sequence, read N- to C-terminus: Guanine nucleotide-binding protein G(i) subunit alpha (354 aa).

The N-myristoyl glycine moiety is linked to residue Gly-2. The S-palmitoyl cysteine moiety is linked to residue Cys-3. Residues 32-354 form the G-alpha domain; that stretch reads REVKLLLLGA…KNNLKDCGLF (323 aa). Residues 35–48 form a G1 motif region; it reads KLLLLGAGESGKST. GTP-binding positions include 40 to 47, 175 to 181, 200 to 204, 269 to 272, and Ala-326; these read GAGESGKS, LRTRVKT, DVGGQ, and NKKD. Residues Ser-47 and Thr-181 each contribute to the Mg(2+) site. A G2 motif region spans residues 173 to 181; sequence DVLRTRVKT. Residues 196-205 are G3 motif; it reads FKMFDVGGQR. The tract at residues 265-272 is G4 motif; the sequence is ILFLNKKD. The tract at residues 324-329 is G5 motif; that stretch reads TCATDT.

It belongs to the G-alpha family. G(i/o/t/z) subfamily. In terms of assembly, g proteins are composed of 3 units; alpha, beta and gamma. The alpha chain contains the guanine nucleotide binding site.

In terms of biological role, guanine nucleotide-binding proteins (G proteins) are involved as modulators or transducers in various transmembrane signaling systems. The G(i) proteins are involved in hormonal regulation of adenylate cyclase: they inhibit the cyclase in response to beta-adrenergic stimuli. The sequence is that of Guanine nucleotide-binding protein G(i) subunit alpha from Lymnaea stagnalis (Great pond snail).